Reading from the N-terminus, the 201-residue chain is Sorting nexin-10 (201 aa).

A required for interaction with ATP6V1D region spans residues Glu8–Leu125. Positions Phe10–Ser127 constitute a PX domain. Positions 53, 79, and 94 each coordinate a 1,2-diacyl-sn-glycero-3-phospho-(1D-myo-inositol-3-phosphate). The interval Arg155 to Ser201 is disordered.

The protein belongs to the sorting nexin family. Interacts with ATP6V1D; may play a role in ciliogenesis. Expressed in femur, calvariae and teeth.

It is found in the cytoplasm. The protein localises to the endosome membrane. The protein resides in the cytoskeleton. Its subcellular location is the microtubule organizing center. It localises to the centrosome. In terms of biological role, probable phosphoinositide-binding protein involved in protein sorting and membrane trafficking in endosomes. Plays a role in cilium biogenesis through regulation of the transport and the localization of proteins to the cilium. Required for the localization to the cilium of V-ATPase subunit ATP6V1D and ATP6V0D1, and RAB8A. Involved in osteoclast differentiation and therefore bone resorption. This is Sorting nexin-10 (Snx10) from Mus musculus (Mouse).